A 159-amino-acid chain; its full sequence is Phosphopantetheine adenylyltransferase (159 aa).

Substrate is bound at residue T10. Residues 10–11 and H18 contribute to the ATP site; that span reads TF. The substrate site is built by K42, M74, and R88. ATP is bound by residues 89–91, E99, and 124–130; these read GLR and WSFISSS.

The protein belongs to the bacterial CoaD family. Homohexamer. Mg(2+) serves as cofactor.

It is found in the cytoplasm. It carries out the reaction (R)-4'-phosphopantetheine + ATP + H(+) = 3'-dephospho-CoA + diphosphate. The protein operates within cofactor biosynthesis; coenzyme A biosynthesis; CoA from (R)-pantothenate: step 4/5. Reversibly transfers an adenylyl group from ATP to 4'-phosphopantetheine, yielding dephospho-CoA (dPCoA) and pyrophosphate. The chain is Phosphopantetheine adenylyltransferase from Cronobacter sakazakii (strain ATCC BAA-894) (Enterobacter sakazakii).